The chain runs to 217 residues: Adenylate kinase (217 aa).

ATP is bound at residue 10 to 15 (GIGKGT). The segment at 30-59 (STGDIFRKNFKENTELGTLSKKFIAQGLLV) is NMP. Residues Thr-31, Arg-36, 57 to 59 (LLV), 85 to 88 (GFPR), and Gln-92 each bind AMP. The interval 126 to 163 (GRRICPECGKVYHIEKIPPKNPGICDKDQKTLIQREDD) is LID. Arg-127 provides a ligand contact to ATP. Zn(2+)-binding residues include Cys-130 and Cys-133. 136–137 (VY) serves as a coordination point for ATP. Residues Cys-150 and Asp-153 each coordinate Zn(2+). Residues Arg-160 and Arg-171 each coordinate AMP. Gln-199 contacts ATP.

The protein belongs to the adenylate kinase family. Monomer.

Its subcellular location is the cytoplasm. It carries out the reaction AMP + ATP = 2 ADP. The protein operates within purine metabolism; AMP biosynthesis via salvage pathway; AMP from ADP: step 1/1. Catalyzes the reversible transfer of the terminal phosphate group between ATP and AMP. Plays an important role in cellular energy homeostasis and in adenine nucleotide metabolism. This chain is Adenylate kinase, found in Aster yellows witches'-broom phytoplasma (strain AYWB).